The sequence spans 550 residues: Forkhead box protein N4 (550 aa).

The fork-head DNA-binding region spans 231–327; sequence KPIYSYSCLI…EEMQKWKRKD (97 aa). A compositionally biased stretch (low complexity) spans 402–411; that stretch reads LQNQSRLAPS. The disordered stretch occupies residues 402 to 437; sequence LQNQSRLAPSSPAPAQTPPLHTVPDMTNSSLPQHPA.

As to expression, isoform 1 is expressed mainly in adult thymus. Isoform 2 is detected in adult skin. Isoform 3 is expressed in adult brain and embryo. Prominent expression sites include the olfactory placode, the basal layer of the olfactory epithelium, the neuroepithelium of the developing retina, the germinal zone of the differentiated eye, regions of motoneuron development in the neural tube and periventricular regions of the brain.

The protein resides in the nucleus. Functionally, transcription factor essential for neural and some non-neural tissues development. Binds to an 11-bp consensus sequence containing the invariant tetranucleotide 5'-ACGC-3'. During development of the central nervous system, required to specify the amacrine and horizontal cell fates from multipotent retinal progenitors while suppressing the alternative photoreceptor cell fates. Drives commitment of p2 progenitors to the V2b interneuron fates during spinal cord neurogenesis. In development of non-neural tissues, plays an essential role in the specification of the atrioventricular canal. This chain is Forkhead box protein N4 (foxn4), found in Danio rerio (Zebrafish).